Consider the following 168-residue polypeptide: Cytolysin secretion protein (168 aa).

This chain is Cytolysin secretion protein (vvhB), found in Vibrio vulnificus (strain CMCP6).